Consider the following 106-residue polypeptide: Cytochrome c oxidase assembly protein COX16 homolog, mitochondrial (106 aa).

Over 1-15 (MIAPAVLRALRKNKT) the chain is Mitochondrial matrix. A helical transmembrane segment spans residues 16–33 (LRYGVPMLLLVVGGSFGL). The Mitochondrial intermembrane segment spans residues 34-106 (REFSQIRYDA…NPETLKPKTT (73 aa)). A disordered region spans residues 81 to 106 (IRGPRPWEDPQLLQGRNPETLKPKTT).

Belongs to the COX16 family. In terms of assembly, associates with the MITRAC complex. Interacts with MT-CO2/COX; specifically interacts with newly synthesized MT-CO2/COX. Interacts with SCO1, SCO2 and COA6.

The protein localises to the mitochondrion inner membrane. Its function is as follows. Required for the assembly of the mitochondrial respiratory chain complex IV (CIV), also known as cytochrome c oxidase. Promotes the insertion of copper into the active site of cytochrome c oxidase subunit II (MT-CO2/COX2). Interacts specifically with newly synthesized MT-CO2/COX and its copper center-forming metallochaperones SCO1, SCO2 and COA6. Probably facilitates MT-CO2/COX2 association with the MITRAC assembly intermediate containing MT-CO1/COX1, thereby participating in merging the MT-CO1/COX1 and MT-CO2/COX2 assembly lines. The chain is Cytochrome c oxidase assembly protein COX16 homolog, mitochondrial from Mus musculus (Mouse).